Here is a 625-residue protein sequence, read N- to C-terminus: Autophagy-related protein 20 (625 aa).

The disordered stretch occupies residues 1–59; that stretch reads MNPNDNNLFGDIEQDNNPSFYGNQSFLRDPYGKSKQTCPPSVTSNGDPSITNDDNNSAH. Composition is skewed to polar residues over residues 15–26 and 34–59; these read DNNPSFYGNQSF and SKQT…NSAH. In terms of domain architecture, PX spans 79 to 202; that stretch reads NDPNLQINVI…HKFLDPNYEL (124 aa). The a 1,2-diacyl-sn-glycero-3-phospho-(1D-myo-inositol-3-phosphate) site is built by arginine 118, serine 120, lysine 144, and arginine 167.

This sequence belongs to the sorting nexin family.

Its subcellular location is the endosome membrane. It localises to the preautophagosomal structure membrane. In terms of biological role, required for cytoplasm to vacuole transport (Cvt), pexophagy and mitophagy. Also involved in endoplasmic reticulum-specific autophagic process and is essential for the survival of cells subjected to severe ER stress. Functions in protein retrieval from the endocytic pathway. The sequence is that of Autophagy-related protein 20 (ATG20) from Debaryomyces hansenii (strain ATCC 36239 / CBS 767 / BCRC 21394 / JCM 1990 / NBRC 0083 / IGC 2968) (Yeast).